The primary structure comprises 504 residues: Light-independent protochlorophyllide reductase subunit B (504 aa).

Asp-36 contributes to the [4Fe-4S] cluster binding site. Asp-279 acts as the Proton donor in catalysis. 414–415 (GL) is a substrate binding site.

It belongs to the ChlB/BchB/BchZ family. Protochlorophyllide reductase is composed of three subunits; BchL, BchN and BchB. Forms a heterotetramer of two BchB and two BchN subunits. Requires [4Fe-4S] cluster as cofactor.

It catalyses the reaction chlorophyllide a + oxidized 2[4Fe-4S]-[ferredoxin] + 2 ADP + 2 phosphate = protochlorophyllide a + reduced 2[4Fe-4S]-[ferredoxin] + 2 ATP + 2 H2O. It functions in the pathway porphyrin-containing compound metabolism; bacteriochlorophyll biosynthesis (light-independent). In terms of biological role, component of the dark-operative protochlorophyllide reductase (DPOR) that uses Mg-ATP and reduced ferredoxin to reduce ring D of protochlorophyllide (Pchlide) to form chlorophyllide a (Chlide). This reaction is light-independent. The NB-protein (BchN-BchB) is the catalytic component of the complex. In Acidiphilium rubrum, this protein is Light-independent protochlorophyllide reductase subunit B.